Here is a 481-residue protein sequence, read N- to C-terminus: Aspartyl/glutamyl-tRNA(Asn/Gln) amidotransferase subunit B (481 aa).

This sequence belongs to the GatB/GatE family. GatB subfamily. In terms of assembly, heterotrimer of A, B and C subunits.

The enzyme catalyses L-glutamyl-tRNA(Gln) + L-glutamine + ATP + H2O = L-glutaminyl-tRNA(Gln) + L-glutamate + ADP + phosphate + H(+). It carries out the reaction L-aspartyl-tRNA(Asn) + L-glutamine + ATP + H2O = L-asparaginyl-tRNA(Asn) + L-glutamate + ADP + phosphate + 2 H(+). Allows the formation of correctly charged Asn-tRNA(Asn) or Gln-tRNA(Gln) through the transamidation of misacylated Asp-tRNA(Asn) or Glu-tRNA(Gln) in organisms which lack either or both of asparaginyl-tRNA or glutaminyl-tRNA synthetases. The reaction takes place in the presence of glutamine and ATP through an activated phospho-Asp-tRNA(Asn) or phospho-Glu-tRNA(Gln). In Pseudomonas fluorescens (strain SBW25), this protein is Aspartyl/glutamyl-tRNA(Asn/Gln) amidotransferase subunit B.